The sequence spans 700 residues: Suprabasin (700 aa).

The signal sequence occupies residues 1–23 (MYLVSLLSSCCLLVLLGTLPARA). Disordered regions lie at residues 133–158 (QGGS…VANK), 183–258 (HAFG…VADK), and 283–391 (HAFG…GAHH). The stretch at 488–546 (KEAEKVAHGVQNGVNQAQKEAEKVAHGVQNGVNQAQKEAEKVAHGVQNGVNQAQKEAEK) forms a coiled coil. The span at 641 to 654 (GVNQPSKEANQLLN) shows a compositional bias: polar residues. The segment at 641-669 (GVNQPSKEANQLLNGSHQGQGGYGGQHGG) is disordered. A compositionally biased stretch (gly residues) spans 658-668 (QGQGGYGGQHG).

In terms of tissue distribution, detected in epidermis, in suprabasal keratinocytes. Detected in suprabasal layers of embryonic epidermis and in stratified layers of embryonic tongue and palate. Detected in adult stomach.

It localises to the secreted. In Mus musculus (Mouse), this protein is Suprabasin (Sbsn).